A 383-amino-acid chain; its full sequence is UDP-N-acetylglucosamine--N-acetylmuramyl-(pentapeptide) pyrophosphoryl-undecaprenol N-acetylglucosamine transferase (383 aa).

UDP-N-acetyl-alpha-D-glucosamine is bound by residues 10–12 (TGG), Asn124, Arg165, Ser190, Ile245, and Gln290. The tract at residues 364 to 383 (PFGQAREPGQKPARPPDLAS) is disordered.

The protein belongs to the glycosyltransferase 28 family. MurG subfamily.

The protein resides in the cell inner membrane. It carries out the reaction di-trans,octa-cis-undecaprenyl diphospho-N-acetyl-alpha-D-muramoyl-L-alanyl-D-glutamyl-meso-2,6-diaminopimeloyl-D-alanyl-D-alanine + UDP-N-acetyl-alpha-D-glucosamine = di-trans,octa-cis-undecaprenyl diphospho-[N-acetyl-alpha-D-glucosaminyl-(1-&gt;4)]-N-acetyl-alpha-D-muramoyl-L-alanyl-D-glutamyl-meso-2,6-diaminopimeloyl-D-alanyl-D-alanine + UDP + H(+). It participates in cell wall biogenesis; peptidoglycan biosynthesis. In terms of biological role, cell wall formation. Catalyzes the transfer of a GlcNAc subunit on undecaprenyl-pyrophosphoryl-MurNAc-pentapeptide (lipid intermediate I) to form undecaprenyl-pyrophosphoryl-MurNAc-(pentapeptide)GlcNAc (lipid intermediate II). The sequence is that of UDP-N-acetylglucosamine--N-acetylmuramyl-(pentapeptide) pyrophosphoryl-undecaprenol N-acetylglucosamine transferase from Anaeromyxobacter dehalogenans (strain 2CP-C).